A 147-amino-acid chain; its full sequence is Large ribosomal subunit protein bL9 (147 aa).

The protein belongs to the bacterial ribosomal protein bL9 family.

Its function is as follows. Binds to the 23S rRNA. The chain is Large ribosomal subunit protein bL9 from Clostridium botulinum (strain Alaska E43 / Type E3).